Consider the following 676-residue polypeptide: MATSQRKILVTSALPYANGPIHLGHMLEYIQTDIWSRYQKLRGHECHYICADDAHGTPIMLKAQQLGMAPEEMIAQVNKEHQQDFADFNIAFDNYHSTHSEENRVLASDIYLKLRANGYIKSKSISQLFDPEKSMFLPDRFVKGTCPKCKSPDQYGDNCDACGATYSPTELINPKSAVSGATPVMKDTEHFFFDLPAFEDMLKEWTRSGALQTEMANKLDEWFEQGLQQWDITRDAPYFGFEIPDAPGKYFYVWLDAPIGYMGSFKNLCDKHPELSFDEFWAKDSKAEVYHFIGKDIVYFHSLFWPAMLHGSGYRQPNSVYAHGYVTVNGAKMSKSKGTFIKARTYLDHLDPEYLRYYYAAKLSSRIDDLDLNLEDFVQRVNSDLVGKLVNLASRTAGFITKRFDGKLAKIADTTLTDAFLAKQEQIAEFYETREYGKAMREIMALADIANGFVADAAPWQLVKQDDQQETAHQVCSNALNLFRILVTYLKPVLPRLALDVEAFFQQTLTWDALNQDMAGHEIAPFKAMMQRVELEKVNAMVADSKENLQATSEPEAPKGPLATDPISDTINFEDFAKIDLRIARIVKAEHVAEADKLLKLQLDIGGETRQVFAGIKSAYSPEDLEGKLTVMVANLAPRKMRFGMSEGMVLAAGPGGSDLWILEPHEGAQPGMRVK.

Residues P15 to H25 carry the 'HIGH' region motif. 4 residues coordinate Zn(2+): C146, C149, C159, and C162. Positions K332–S336 match the 'KMSKS' region motif. ATP is bound at residue K335. Positions D575 to K676 constitute a tRNA-binding domain.

It belongs to the class-I aminoacyl-tRNA synthetase family. MetG type 1 subfamily. As to quaternary structure, homodimer. It depends on Zn(2+) as a cofactor.

It localises to the cytoplasm. It carries out the reaction tRNA(Met) + L-methionine + ATP = L-methionyl-tRNA(Met) + AMP + diphosphate. In terms of biological role, is required not only for elongation of protein synthesis but also for the initiation of all mRNA translation through initiator tRNA(fMet) aminoacylation. This is Methionine--tRNA ligase from Shewanella sp. (strain ANA-3).